A 426-amino-acid polypeptide reads, in one-letter code: 3-phosphoshikimate 1-carboxyvinyltransferase (426 aa).

3-phosphoshikimate contacts are provided by Lys22, Ser23, and Arg27. Phosphoenolpyruvate is bound at residue Lys22. Phosphoenolpyruvate is bound by residues Gly96 and Arg124. 7 residues coordinate 3-phosphoshikimate: Ser170, Ser171, Gln172, Ser198, Asp314, Asn337, and Lys341. Residue Gln172 participates in phosphoenolpyruvate binding. Asp314 (proton acceptor) is an active-site residue. Residues Arg345, Arg387, and Lys412 each contribute to the phosphoenolpyruvate site.

Belongs to the EPSP synthase family. In terms of assembly, monomer.

It is found in the cytoplasm. The catalysed reaction is 3-phosphoshikimate + phosphoenolpyruvate = 5-O-(1-carboxyvinyl)-3-phosphoshikimate + phosphate. It participates in metabolic intermediate biosynthesis; chorismate biosynthesis; chorismate from D-erythrose 4-phosphate and phosphoenolpyruvate: step 6/7. Catalyzes the transfer of the enolpyruvyl moiety of phosphoenolpyruvate (PEP) to the 5-hydroxyl of shikimate-3-phosphate (S3P) to produce enolpyruvyl shikimate-3-phosphate and inorganic phosphate. The sequence is that of 3-phosphoshikimate 1-carboxyvinyltransferase from Vibrio cholerae serotype O1 (strain ATCC 39541 / Classical Ogawa 395 / O395).